Consider the following 272-residue polypeptide: MDNLIKDMRENLNSYSFKVVSDLVKELDVNRDNKAQIKELADLLKEDKRKNVSSLGNRLEKNLNNLIKEEERVKNMYFFDKSFGDYKYVAGVDEVGRGPLAGPIVSAAVILDSSNLDDIILYINDSKKLSEHKREELSEIIKEKALSYSISMCDSKEIDEKGIGYCNNHVFIKACEGLNIKPDLVLSDGYLIKNFNGENKHVIKGDTKSACIACASIIAKVYRDNIMKEYHKKYPQYDFEKNVGYGTKTHVDALKEVGPTEIHRMSFLKNIL.

In terms of domain architecture, RNase H type-2 spans 87-272 (KYVAGVDEVG…HRMSFLKNIL (186 aa)). Asp-93, Glu-94, and Asp-188 together coordinate a divalent metal cation.

It belongs to the RNase HII family. Mn(2+) is required as a cofactor. It depends on Mg(2+) as a cofactor.

It is found in the cytoplasm. It carries out the reaction Endonucleolytic cleavage to 5'-phosphomonoester.. Its function is as follows. Endonuclease that specifically degrades the RNA of RNA-DNA hybrids. The polypeptide is Ribonuclease HII (Clostridium perfringens (strain SM101 / Type A)).